A 324-amino-acid polypeptide reads, in one-letter code: Transcriptional regulator protein Pur-beta (324 aa).

The disordered stretch occupies residues 1 to 47 (MADGDSGSERGGGGGGGGGPGGFQPAPRGGGGGGGGPGGEQETQELA). Ala2 carries the N-acetylalanine modification. Phosphoserine is present on residues Ser6 and Ser8. A compositionally biased stretch (gly residues) spans 9-39 (ERGGGGGGGGGPGGFQPAPRGGGGGGGGPGG). Arg28 is subject to Omega-N-methylarginine. The segment at 37 to 263 (PGGEQETQEL…GVFLRVSEVK (227 aa)) is DNA-binding. Thr43 is modified (phosphothreonine). Residue Ser113 is modified to Phosphoserine. Residue Arg164 is modified to Omega-N-methylarginine. At Lys279 the chain carries N6-acetyllysine. The span at 297–307 (RQRDKLYERRG) shows a compositional bias: basic and acidic residues. The segment at 297 to 324 (RQRDKLYERRGGGSGGGDESEGEEVDED) is disordered. At Arg306 the chain carries Omega-N-methylarginine. A phosphoserine mark is found at Ser310 and Ser316. Acidic residues predominate over residues 314–324 (DESEGEEVDED).

It belongs to the PUR DNA-binding protein family. Homodimer, heterodimer with PURA and heterotrimer with PURA and YBX1/Y-box protein 1. Interacts with MYOCD and SRF.

It localises to the nucleus. Its function is as follows. Transcriptional regulator which can act as an activator or a repressor. Represses the transcription of ACTA2 in fibroblasts and smooth muscle cells via its ability to interact with the purine-rich strand of a MCAT-containing element in the 5' flanking region of the gene. Represses the transcription of MYOCD, capable of repressing all isoforms of MYOCD but the magnitude of the repressive effects is most notable for the SMC-specific isoforms. Promotes hepatic glucose production by activating the transcription of ADCY6, leading to cAMP accumulation, increased PKA activity, CREB activation, and increased transcription of PCK1 and G6PC genes. Has capacity to bind repeated elements in single-stranded DNA such as the purine-rich single strand of the PUR element located upstream of the MYC gene. Participates in transcriptional and translational regulation of alpha-MHC expression in cardiac myocytes by binding to the purine-rich negative regulatory (PNR) element. Modulates constitutive liver galectin-3 gene transcription by binding to its promoter. May play a role in the dendritic transport of a subset of mRNAs. In Mus musculus (Mouse), this protein is Transcriptional regulator protein Pur-beta (Purb).